The chain runs to 532 residues: Flavin-containing monooxygenase 3 (532 aa).

Residues G9 to S13, E32, L40 to W41, and N61 to S62 contribute to the FAD site. NADP(+) is bound by residues T60–N61 and S195–D198. Residue S401 is modified to Phosphoserine. A helical transmembrane segment spans residues C512–I532.

Belongs to the FMO family. The cofactor is FAD.

Its subcellular location is the microsome membrane. The protein localises to the endoplasmic reticulum membrane. It carries out the reaction trimethylamine + NADPH + O2 = trimethylamine N-oxide + NADP(+) + H2O. It catalyses the reaction N,N-dimethylaniline + NADPH + O2 + H(+) = N,N-dimethylaniline N-oxide + NADP(+) + H2O. The catalysed reaction is hypotaurine + NADPH + O2 + H(+) = taurine + NADP(+) + H2O. The enzyme catalyses (S)-nicotine + NADPH + O2 = trans-(S)-nicotine N(1')-oxide + NADP(+) + H2O. It carries out the reaction albendazole + NADPH + O2 + H(+) = albendazole S-oxide + NADP(+) + H2O. Essential hepatic enzyme that catalyzes the oxygenation of a wide variety of nitrogen- and sulfur-containing compounds including drugs as well as dietary compounds. Plays an important role in the metabolism of trimethylamine (TMA), via the production of trimethylamine N-oxide (TMAO) metabolite. TMA is generated by the action of gut microbiota using dietary precursors such as choline, choline containing compounds, betaine or L-carnitine. By regulating TMAO concentration, FMO3 directly impacts both platelet responsiveness and rate of thrombus formation. This Canis lupus familiaris (Dog) protein is Flavin-containing monooxygenase 3 (FMO3).